Consider the following 149-residue polypeptide: MAHIFVYGTLKRGQPNHKVMLDHSHGLAAFRGRGCTVESFPLVIAGEHNIPWLLYLPGKGHCVTGEIYEVDEQMLRFLDDFEDCPSMYQRTALQVQVLEWEGDGDPGDSVQCFVYTTATYAPEWLFLPYHESYDSEGPHGLRYNPRENR.

Residue 7 to 10 (YGTL) coordinates substrate. Catalysis depends on glutamate 82, which acts as the Proton acceptor.

The protein belongs to the gamma-glutamylcyclotransferase family. In terms of assembly, monomer.

The enzyme catalyses epsilon-(gamma-L-glutamyl)-L-lysine = 5-oxo-L-proline + L-lysine. Its function is as follows. Contributes to degradation of proteins cross-linked by transglutaminases by degrading the cross-link between a lysine and a glutamic acid residue. Catalyzes the formation of 5-oxo-L-proline from L-gamma-glutamyl-L-epsilon-lysine. Inactive with L-gamma-glutamyl-alpha-amino acid substrates such as L-gamma-glutamyl-L-alpha-cysteine and L-gamma-glutamyl-L-alpha-alanine. The sequence is that of Gamma-glutamylaminecyclotransferase (Ggact) from Mus musculus (Mouse).